We begin with the raw amino-acid sequence, 600 residues long: Putative acetyltransferase MPN_114 (600 aa).

H323 acts as the Proton acceptor in catalysis. A CoA-binding site is contributed by 396–409; the sequence is TKPLIKAKGIKNSE.

Belongs to the carnitine/choline acetyltransferase family.

The protein is Putative acetyltransferase MPN_114 of Mycoplasma pneumoniae (strain ATCC 29342 / M129 / Subtype 1) (Mycoplasmoides pneumoniae).